We begin with the raw amino-acid sequence, 805 residues long: Sucrose synthase (805 aa).

Residues 275–752 form a GT-B glycosyltransferase region; the sequence is MVFNVVILSP…GLQRIEEKYT (478 aa).

It belongs to the glycosyltransferase 1 family. Plant sucrose synthase subfamily.

It catalyses the reaction an NDP-alpha-D-glucose + D-fructose = a ribonucleoside 5'-diphosphate + sucrose + H(+). Its function is as follows. Sucrose-cleaving enzyme that provides UDP-glucose and fructose for various metabolic pathways. The chain is Sucrose synthase from Medicago sativa (Alfalfa).